The chain runs to 51 residues: MRDKIKLVSTAGTGHYYTTDKNKRNTPHKLEFRKYDPVVRKHVLYREAKIK.

Belongs to the bacterial ribosomal protein bL33 family.

This Alkalilimnicola ehrlichii (strain ATCC BAA-1101 / DSM 17681 / MLHE-1) protein is Large ribosomal subunit protein bL33.